The chain runs to 358 residues: MTQLFPGPIVRTPGLAELDARARDIFRRVVESYLETGEPVGSRTISKGGVALSPASIRNTMQDLAQLGLLDAPHTSAGRMPTHAGLRMFVDGFLEVGDVAEQEKRAIEARLAVKGRSFEEALAEASSILSGLAGGAGIVVTPVREGGVKHVEFVPLGGGQVLAVMVFEDGQVENRLMRQAPGVTPSALQEASNFLNARLRGRTLTEARTEMGGELDAARRQLNETAARLVEDGLAAWSGGEGDARSLIVRGQANLLADARAREDIDRVRQLFDDLEQKGQLIGLLDDVRDAEGVRIYIGAETRLFSLSGSSVIAAPYMTGRQKVLGAIGVIGPARLNYARVIPLVDYTARVLGRMMDG.

Belongs to the HrcA family.

Its function is as follows. Negative regulator of class I heat shock genes (grpE-dnaK-dnaJ and groELS operons). Prevents heat-shock induction of these operons. The polypeptide is Heat-inducible transcription repressor HrcA (Caulobacter vibrioides (strain NA1000 / CB15N) (Caulobacter crescentus)).